The sequence spans 346 residues: Glycosyltransferase 1 domain-containing protein 1 (346 aa).

Residues 1–16 (MRLLFLAVLRPHTGNA) form the signal peptide.

This sequence belongs to the glycosyltransferase group 1 family. Glycosyltransferase 4 subfamily.

The protein resides in the secreted. The protein is Glycosyltransferase 1 domain-containing protein 1 (GLT1D1) of Homo sapiens (Human).